A 328-amino-acid polypeptide reads, in one-letter code: Probable cytosolic iron-sulfur protein assembly protein 1 (328 aa).

7 WD repeats span residues 12 to 49 (LHGDRCWSVDISKGLLATGSADRKIKLVDVRNFKLVEE), 54 to 93 (AHKKAVRSVAWRPHCNVLAAGSFDTTVSIWGRDDDDYSGE), 102 to 141 (GHENEVKSVAWSHDGAYLATCSRDKSVWIWEADELSEEFE), 148 to 187 (EHSQDVKHIVWHASRLLLASSSYDDTVRIWAEQDDDWECA), 192 to 233 (GHGG…ADVF), 246 to 284 (VHTRAVYSVSWSADGLIASVGSDGVLAVYKEVQAGRWEV), and 291 to 328 (AHTVYEINVVKWLALDGRVLLVTGGDDGCVNVWELREE).

The protein belongs to the WD repeat CIA1 family. As to quaternary structure, interacts with NAR1.

It is found in the cytoplasm. It localises to the nucleus. Essential component of the cytosolic iron-sulfur (Fe/S) protein assembly machinery. Required for the maturation of extramitochondrial Fe/S proteins. The sequence is that of Probable cytosolic iron-sulfur protein assembly protein 1 from Eremothecium gossypii (strain ATCC 10895 / CBS 109.51 / FGSC 9923 / NRRL Y-1056) (Yeast).